Here is a 466-residue protein sequence, read N- to C-terminus: MGGMPILKLYNTLTREKADFRPIDPQNVRMYVCGPTVYDYAHIGNARPIIVFDVLFRLLRHVYGADHVTYARNITDVDDKINARALRDYPGLPLNEAIRHVTEKTETQFLEDATVLGCLDPTVQPRATENIAGMIEIIEKLIAKGHAYEAEGEVLFDTRSMDDYGQLSKRNLDEQQAGARVAVEAHKKNPGDFVLWKLSAEHEPGWDSPWGRGRPGWHIECSAMSGRYLGDVFDIHGGGIDLIFPHHENEIAQSRCAHGTEVMANVWMHNGFLQVEGRKMSKSEGNFITIYELLHTEKFGGRKWPGEVLRLAMLMTHYREPIDFSIKRLEEAEHLLSKWPVYGDAAGEADPAVVTALADDLNTVAAIQALHALAQKASADSRHLGTFAASAALLGVVPKEVELDEAVVHEIDGRVRERLELLKAKNYAEADGIRADLLARGIQLKDGKDPETGERVTTWEVKRSQV.

C33 contacts Zn(2+). Positions 35-45 match the 'HIGH' region motif; that stretch reads PTVYDYAHIGN. C221, H246, and E250 together coordinate Zn(2+). The 'KMSKS' region motif lies at 279–283; the sequence is KMSKS. Position 282 (K282) interacts with ATP.

This sequence belongs to the class-I aminoacyl-tRNA synthetase family. Monomer. It depends on Zn(2+) as a cofactor.

The protein resides in the cytoplasm. The enzyme catalyses tRNA(Cys) + L-cysteine + ATP = L-cysteinyl-tRNA(Cys) + AMP + diphosphate. This is Cysteine--tRNA ligase from Rhizobium meliloti (strain 1021) (Ensifer meliloti).